Reading from the N-terminus, the 201-residue chain is 3-isopropylmalate dehydratase small subunit (201 aa).

The protein belongs to the LeuD family. LeuD type 1 subfamily. Heterodimer of LeuC and LeuD.

It catalyses the reaction (2R,3S)-3-isopropylmalate = (2S)-2-isopropylmalate. It participates in amino-acid biosynthesis; L-leucine biosynthesis; L-leucine from 3-methyl-2-oxobutanoate: step 2/4. Functionally, catalyzes the isomerization between 2-isopropylmalate and 3-isopropylmalate, via the formation of 2-isopropylmaleate. The protein is 3-isopropylmalate dehydratase small subunit of Sinorhizobium fredii (strain NBRC 101917 / NGR234).